The following is a 210-amino-acid chain: UPF0301 protein OCAR_7326/OCA5_c07920 (210 aa).

The protein belongs to the UPF0301 (AlgH) family.

The chain is UPF0301 protein OCAR_7326/OCA5_c07920 from Afipia carboxidovorans (strain ATCC 49405 / DSM 1227 / KCTC 32145 / OM5) (Oligotropha carboxidovorans).